The chain runs to 641 residues: YAP1-binding protein 2 (641 aa).

This sequence belongs to the YBP1 family.

The protein resides in the cytoplasm. In terms of biological role, involved in oxidative stress response and redox homeostasis. Required for hydrogen peroxide-induced activation of YAP1. Acts in a parallele pathway to YBP1. The protein is YAP1-binding protein 2 of Saccharomyces cerevisiae (strain ATCC 204508 / S288c) (Baker's yeast).